A 183-amino-acid polypeptide reads, in one-letter code: ATP synthase subunit delta (183 aa).

The protein belongs to the ATPase delta chain family. In terms of assembly, F-type ATPases have 2 components, F(1) - the catalytic core - and F(0) - the membrane proton channel. F(1) has five subunits: alpha(3), beta(3), gamma(1), delta(1), epsilon(1). F(0) has three main subunits: a(1), b(2) and c(10-14). The alpha and beta chains form an alternating ring which encloses part of the gamma chain. F(1) is attached to F(0) by a central stalk formed by the gamma and epsilon chains, while a peripheral stalk is formed by the delta and b chains.

The protein resides in the cell inner membrane. F(1)F(0) ATP synthase produces ATP from ADP in the presence of a proton or sodium gradient. F-type ATPases consist of two structural domains, F(1) containing the extramembraneous catalytic core and F(0) containing the membrane proton channel, linked together by a central stalk and a peripheral stalk. During catalysis, ATP synthesis in the catalytic domain of F(1) is coupled via a rotary mechanism of the central stalk subunits to proton translocation. In terms of biological role, this protein is part of the stalk that links CF(0) to CF(1). It either transmits conformational changes from CF(0) to CF(1) or is implicated in proton conduction. The polypeptide is ATP synthase subunit delta (Rickettsia prowazekii (strain Madrid E)).